We begin with the raw amino-acid sequence, 503 residues long: Cell wall integrity and stress response component 2 (503 aa).

The first 23 residues, Met1 to Ala23, serve as a signal peptide directing secretion. The Extracellular portion of the chain corresponds to Asp24–Gly325. The region spanning Gln25–Asn118 is the WSC domain. Residues Asp124–Thr260 form a disordered region. The chain crosses the membrane as a helical span at residues Val326 to Val346. Over Trp347–Arg503 the chain is Cytoplasmic. Thr402 is modified (phosphothreonine). Phosphoserine occurs at positions 455 and 458. Positions Ile470 to Arg503 are disordered.

Post-translationally, N-glycosylated.

The protein localises to the cell membrane. In Saccharomyces cerevisiae (strain ATCC 204508 / S288c) (Baker's yeast), this protein is Cell wall integrity and stress response component 2 (WSC2).